The primary structure comprises 644 residues: Protein SNOWY COTYLEDON 3 (644 aa).

3 disordered regions span residues 1-129, 162-252, and 290-414; these read MVAA…TRTE, ETAT…DGRL, and SDTD…SRVR. Residues 53 to 77 show a composition bias toward low complexity; the sequence is SPSPSHSTTTTTTTATSTSTSSSSS. A compositionally biased stretch (polar residues) spans 91–112; sequence LSRTTNSASNLVYTPSSLPKRS. Basic and acidic residues predominate over residues 172–190; the sequence is CTPERRRATPVRDQRENSK. 2 stretches are compositionally biased toward polar residues: residues 290-302 and 314-332; these read SDTD…STNG and TRSL…QETN. Low complexity-rich tracts occupy residues 343–370 and 397–412; these read SPQC…SSDS and ATAT…SPSR. Positions 463–466 match the QWRF motif motif; it reads QWRF.

This sequence belongs to the QWRF family. Expressed in young developing tissues, such as seedlings, roots, flowers, buds and young siliques, and to a lesser extent in mature green tissues.

Its subcellular location is the peroxisome. Functionally, probable microtubule-associated peroxisomal protein required for chloroplast biogenesis and for the formation of the prolamellar body and prothylakoids in etioplasts. Not involved in peroxisomal metabolism, including mobilization of storage compounds during germination, fatty acid beta-oxydation or photorespiration. This Arabidopsis thaliana (Mouse-ear cress) protein is Protein SNOWY COTYLEDON 3 (SCO3).